Consider the following 367-residue polypeptide: Embryonic developmental protein tofu-6 (367 aa).

The 80-residue stretch at alanine 13 to asparagine 92 folds into the RRM domain. A required for ife-3 interaction region spans residues lysine 298–alanine 345.

As to quaternary structure, component of the pid-1 variant of the PETISCO complex (also called the pid-3, erh-2, tofu-6, and ife-3 small RNA complex) containing at least pid-1, tofu-6, ife-3, pid-3, and erh-2, which is required for the biogenesis of 21 nucleotide PIWI-interacting RNAs (piRNAs) that possess a uracil residue at the 5'-end (also called 21U-RNAs). Within the pid-1 variant of the PETISCO complex interacts with pid-1. Component of the tost-1 variant of the PETISCO complex (also called the pid-3, erh-2, tofu-6, and ife-3 small RNA complex) containing at least tost-1, tofu-6, ife-3, pid-3, and erh-2, which plays an essential role in embryogenesis. Within the tost-1 variant of the PETISCO complex interacts with tost-1. Within the pid-1 and tost-1 variants of the PETISCO complexes interacts (via C-terminus) with ife-3. Within the pid-1 and tost-1 variants of the PETISCO complexes interacts (via the RRM domain) with pid-3. Within the pid-1 and tost-1 variants of the PETISCO complexes interacts (via the RRM domain) with erh-2. In contrast to the pid-1 variant of the PETISCO complex, the tost-1 variant of the PETISCO complex plays a minor role in the biogenesis of 21U-RNAs. Interacts (via residues 120-314) with the PUCH complex subunit tofu-1 (via residues 82-172); the interaction between the PETISCO and PUCH complex members enhances piRNA production in vivo. In terms of tissue distribution, expression is restricted to the germline (at protein level).

It is found in the cytoplasm. The protein localises to the perinuclear region. It localises to the nucleus. In terms of biological role, component of the pid-1 and tost-1 variants of the PETISCO complexes, which have roles in the biogenesis of a class of 21 nucleotide PIWI-interacting RNAs (piRNAs) that possess a uracil residue at the 5'-end (also called 21U-RNAs) and embryogenesis, respectively. Promotes the biogenesis of 21U-RNAs. Mediates the interaction between the PETISCO complex and the PUCH complex, the endoribonuclease complex processing the 5'-end of precursor piRNAs, thereby enhancing mature piRNA production. Required for chromosome segregation and cell division in early embryos. May have a role in DNA replication. The protein is Embryonic developmental protein tofu-6 of Caenorhabditis elegans.